Consider the following 356-residue polypeptide: Myricetin 7/4'-O-methyltransferase 2 (356 aa).

Asp-222 is a binding site for S-adenosyl-L-methionine. His-260 functions as the Proton acceptor in the catalytic mechanism.

This sequence belongs to the class I-like SAM-binding methyltransferase superfamily. Cation-independent O-methyltransferase family. Homodimer.

It catalyses the reaction quercetin + S-adenosyl-L-methionine = rhamnetin + S-adenosyl-L-homocysteine + H(+). The catalysed reaction is kaempferol + S-adenosyl-L-methionine = kaempferide + S-adenosyl-L-homocysteine + H(+). The enzyme catalyses myricetin + S-adenosyl-L-methionine = 7-O-methylmyricetin + S-adenosyl-L-homocysteine + H(+). It carries out the reaction kaempferide + S-adenosyl-L-methionine = 7,4'-O-dimethylkaempferol + S-adenosyl-L-homocysteine + H(+). It catalyses the reaction isorhamnetin + S-adenosyl-L-methionine = 3',4'-O-dimethylquercetin + S-adenosyl-L-homocysteine + 2 H(+). The catalysed reaction is 3',4',5,7-tetrahydroxy-3-methoxyflavone + S-adenosyl-L-methionine = 3',4',5-trihydroxy-3,7-dimethoxyflavone + S-adenosyl-L-homocysteine + H(+). The enzyme catalyses rhamnetin + S-adenosyl-L-methionine = 7,4'-O-dimethylquercetin + S-adenosyl-L-homocysteine + H(+). It carries out the reaction syringetin + S-adenosyl-L-methionine = 7,3',5'-O-trimethylmyricetin + S-adenosyl-L-homocysteine + H(+). It catalyses the reaction 3',4',5'-O-trimethylmyricetin + S-adenosyl-L-methionine = 7,3',4',5'-O-tetramethylmyricetin + S-adenosyl-L-homocysteine. It functions in the pathway flavonoid metabolism. Flavonoid 7/4'-O-methyltransferase involved in the biosynthesis of polymethoxylated flavonoids natural products such as myricetin derivatives, aroma compounds possessing antioxidant properties and exhibiting pharmacological activities such as anti-carcinogen, anti-viral, anti-thrombotic, anti-diabetic, anti-atherosclerotic, and anti-inflammatory effects. Catalyzes S-adenosylmethionine-dependent regioselective 7/4'-O-methylation of flavonoids; active on various hydroxylated flavonoid substrates. This chain is Myricetin 7/4'-O-methyltransferase 2, found in Solanum lycopersicum (Tomato).